Here is a 291-residue protein sequence, read N- to C-terminus: 4-hydroxy-tetrahydrodipicolinate synthase (291 aa).

T44 is a binding site for pyruvate. The active-site Proton donor/acceptor is Y132. K160 functions as the Schiff-base intermediate with substrate in the catalytic mechanism. I202 contributes to the pyruvate binding site.

Belongs to the DapA family. In terms of assembly, homotetramer; dimer of dimers.

It localises to the cytoplasm. It carries out the reaction L-aspartate 4-semialdehyde + pyruvate = (2S,4S)-4-hydroxy-2,3,4,5-tetrahydrodipicolinate + H2O + H(+). It functions in the pathway amino-acid biosynthesis; L-lysine biosynthesis via DAP pathway; (S)-tetrahydrodipicolinate from L-aspartate: step 3/4. Its function is as follows. Catalyzes the condensation of (S)-aspartate-beta-semialdehyde [(S)-ASA] and pyruvate to 4-hydroxy-tetrahydrodipicolinate (HTPA). In Rhizorhabdus wittichii (strain DSM 6014 / CCUG 31198 / JCM 15750 / NBRC 105917 / EY 4224 / RW1) (Sphingomonas wittichii), this protein is 4-hydroxy-tetrahydrodipicolinate synthase.